An 803-amino-acid chain; its full sequence is MutS protein homolog 4 (803 aa).

Gly557–Ser564 is a binding site for ATP.

The protein belongs to the DNA mismatch repair MutS family. In terms of assembly, heterooligomer of MSH4 and MSH5.

In terms of biological role, involved in meiotic recombination. Facilitate crossovers between homologs during meiosis. The chain is MutS protein homolog 4 (MSH4) from Candida albicans (Yeast).